An 873-amino-acid chain; its full sequence is Calmodulin-dependent glutamylase SidJ (873 aa).

The tract at residues 16-90 (QSEDNPSETA…TTSTTKQKGP (75 aa)) is disordered. The segment covering 22–58 (SETAVETTDVSTKIKTTDTTQEESSVKTKTVVPTQPG) has biased composition (polar residues). Residues aspartate 542 and aspartate 545 each coordinate Mg(2+). The segment at 851-873 (NLSEKSDIDSEKPESERTTDKRL) is disordered.

In terms of assembly, interacts with host calmodulin/CALM1; this interaction is required for glutamylase activity. It depends on Mg(2+) as a cofactor.

The catalysed reaction is L-glutamyl-[protein] + L-glutamate + ATP = gamma-L-glutamyl-L-glutamyl-[protein] + ADP + phosphate + H(+). The enzyme catalyses (L-glutamyl)(n)-gamma-L-glutamyl-L-glutamyl-[protein] + L-glutamate + ATP = (L-glutamyl)(n+1)-gamma-L-glutamyl-L-glutamyl-[protein] + ADP + phosphate + H(+). Its activity is regulated as follows. Glytamylation catalyzed by SidJ requires host calmodulin and can be regulated by intracellular changes in Ca2+ concentrations. Also requires ATP. Its function is as follows. Glutamylase that mediates the covalent attachment of glutamate moieties to SdeA on one of the catalytic residues that is required for its mono-ADP-ribosyltransferase activity. In turn, inhibits SdeA ubiquitinating activity. Also glutamylates related SdeB, SdeC and SidE. Glutamylase activity only occurs in the host since it requires host calmodulin. May also reverse the SdeA-mediated substrate ubiquitination by cleaving the phosphodiester bond that links phosphoribosylated ubiquitin to protein substrates via its deubiquitinase activity. This is Calmodulin-dependent glutamylase SidJ from Legionella pneumophila subsp. pneumophila (strain Philadelphia 1 / ATCC 33152 / DSM 7513).